Consider the following 142-residue polypeptide: MFLLDANVLLAAHRGDHPNHRTVRPWFDRLLAADDPFTVPNLVWASFLRLATNRRIFEIPSPRAEAFAFVEAVTAQPHHLPTNPGPRHLMLLRKLCDEADASGDLIPDAVLAAIAVGHHCAVVSLDRDFARFASVRHIRPPL.

In terms of domain architecture, PINc spans 3-139 (LLDANVLLAA…ARFASVRHIR (137 aa)). Mg(2+) is bound by residues aspartate 5 and aspartate 108.

It belongs to the PINc/VapC protein family. Requires Mg(2+) as cofactor.

Toxic component of a type II toxin-antitoxin (TA) system. An RNase. Its toxic effect is neutralized by coexpression with cognate antitoxin VapB31. The sequence is that of Ribonuclease VapC31 from Mycobacterium tuberculosis (strain CDC 1551 / Oshkosh).